A 250-amino-acid polypeptide reads, in one-letter code: DNA repair protein RecO (250 aa).

The protein belongs to the RecO family.

Involved in DNA repair and RecF pathway recombination. This chain is DNA repair protein RecO, found in Staphylococcus aureus (strain Mu3 / ATCC 700698).